Reading from the N-terminus, the 707-residue chain is Toxin RTX-I translocation ATP-binding protein (707 aa).

The 125-residue stretch at 1 to 125 folds into the Peptidase C39 domain; the sequence is MDFYREEDYG…SLYQGKLILV (125 aa). Residue H83 is part of the active site. Residues 154-436 form the ABC transmembrane type-1 domain; the sequence is FIETLIVSIF…LAQLWQDFQQ (283 aa). A run of 5 helical transmembrane segments spans residues 158–178, 188–208, 295–315, 387–407, and 410–430; these read LIVSIFLQIFALITPLFFQVV, FSTLNVITVALAIVVLFEIVL, LVILGSLPFYMGWSIFISPIL, VVMVITLWLGAHLVISGDLSI, and LIAFNMLSGQVIAPVIRLAQL. The ABC transporter domain occupies 468–703; that stretch reads ITFRNIRFRY…PNGLYHYLHQ (236 aa). 502–509 provides a ligand contact to ATP; that stretch reads GRSGSGKS.

Belongs to the ABC transporter superfamily. Protein-1 exporter (TC 3.A.1.109) family. In terms of assembly, homodimer.

The protein localises to the cell membrane. Functionally, involved in the transport of the toxin RTX-I as well as that of RTX-II. This is Toxin RTX-I translocation ATP-binding protein (apxIB) from Actinobacillus pleuropneumoniae (Haemophilus pleuropneumoniae).